The sequence spans 150 residues: uncharacterized protein (150 aa).

The HTH asnC-type domain occupies 5–66 (LDKVDRRLLE…KPNYKKLNLG (62 aa)). The H-T-H motif DNA-binding region spans 24-43 (IATLSKKLGIPRTTVHYRIK).

This is an uncharacterized protein from Pyrococcus abyssi (strain GE5 / Orsay).